The primary structure comprises 287 residues: Cbb3-type cytochrome c oxidase subunit FixPc (287 aa).

Residues 1-36 (MSEKHIDEFSGVETTGHEWDGIRELNNPMPRWWVWT) lie on the Cytoplasmic side of the membrane. The chain crosses the membrane as a helical span at residues 37-57 (FYATIVWALGYAIAYPAIPMI). The Periplasmic portion of the chain corresponds to 58-287 (TDATKGMLGF…IFVHSLGGGT (230 aa)). 2 consecutive Cytochrome c domains span residues 108 to 196 (FAIA…WGLT) and 203 to 284 (GLAE…HSLG). Cys121, Cys124, His125, Met173, Cys216, Cys219, His220, and Met261 together coordinate heme c.

Belongs to the CcoP / FixP family. Component of the cbb3-type cytochrome c oxidase at least composed of FixN, FixO, FixQ and FixP. Heme c is required as a cofactor.

It localises to the cell inner membrane. It participates in energy metabolism; oxidative phosphorylation. Functionally, C-type cytochrome. Part of the cbb3-type cytochrome c oxidase complex. FixP subunit is required for transferring electrons from donor cytochrome c via its heme groups to FixO subunit. From there, electrons are shuttled to the catalytic binuclear center of FixN subunit where oxygen reduction takes place. The complex also functions as a proton pump. This chain is Cbb3-type cytochrome c oxidase subunit FixPc, found in Rhizobium leguminosarum bv. viciae.